The sequence spans 158 residues: Transcriptional repressor NrdR (158 aa).

The segment at 3–34 (CPSCQNTDSRVLESRAADAGRSVRRRRECLHC) is a zinc-finger region. Residues 49 to 139 (ITVLKRNGNR…VYRDFRGVND (91 aa)) form the ATP-cone domain.

Belongs to the NrdR family. Zn(2+) serves as cofactor.

In terms of biological role, negatively regulates transcription of bacterial ribonucleotide reductase nrd genes and operons by binding to NrdR-boxes. The sequence is that of Transcriptional repressor NrdR from Prochlorococcus marinus (strain MIT 9313).